We begin with the raw amino-acid sequence, 520 residues long: Ribonuclease Y (520 aa).

A helical membrane pass occupies residues 4–24 (TVWILISILLATVGAVVGFFV). Positions 86-116 (KQENRLMQKEENLDRKDETLDKREQQLEKKE) are disordered. Residues 210 to 273 (TVSVVNLPND…ETARIALDKL (64 aa)) enclose the KH domain. Positions 336–429 (VLKHSMEVAY…VAAADALSAA (94 aa)) constitute an HD domain.

The protein belongs to the RNase Y family.

It is found in the cell membrane. Endoribonuclease that initiates mRNA decay. This chain is Ribonuclease Y, found in Bacillus cereus (strain ATCC 10987 / NRS 248).